Reading from the N-terminus, the 340-residue chain is Methionine import ATP-binding protein MetN 1 (340 aa).

One can recognise an ABC transporter domain in the interval 2 to 242 (IRLENVSVDF…PQHAYTKQLV (241 aa)). 39 to 46 (GTSGAGKS) is an ATP binding site.

Belongs to the ABC transporter superfamily. Methionine importer (TC 3.A.1.24) family. As to quaternary structure, the complex is composed of two ATP-binding proteins (MetN), two transmembrane proteins (MetI) and a solute-binding protein (MetQ).

The protein localises to the cell inner membrane. The enzyme catalyses L-methionine(out) + ATP + H2O = L-methionine(in) + ADP + phosphate + H(+). It catalyses the reaction D-methionine(out) + ATP + H2O = D-methionine(in) + ADP + phosphate + H(+). Functionally, part of the ABC transporter complex MetNIQ involved in methionine import. Responsible for energy coupling to the transport system. This is Methionine import ATP-binding protein MetN 1 from Pectobacterium atrosepticum (strain SCRI 1043 / ATCC BAA-672) (Erwinia carotovora subsp. atroseptica).